Consider the following 408-residue polypeptide: 1-deoxy-D-xylulose 5-phosphate reductoisomerase (408 aa).

NADPH-binding residues include T27, G28, S29, I30, A53, R54, N55, and N140. K141 serves as a coordination point for 1-deoxy-D-xylulose 5-phosphate. Residue E142 coordinates NADPH. Residue D166 participates in Mn(2+) binding. The 1-deoxy-D-xylulose 5-phosphate site is built by S167, E168, S192, and H215. Residue E168 participates in Mn(2+) binding. Position 221 (G221) interacts with NADPH. Residues S228, N233, K234, and E237 each coordinate 1-deoxy-D-xylulose 5-phosphate. E237 serves as a coordination point for Mn(2+).

The protein belongs to the DXR family. Mg(2+) is required as a cofactor. It depends on Mn(2+) as a cofactor.

The enzyme catalyses 2-C-methyl-D-erythritol 4-phosphate + NADP(+) = 1-deoxy-D-xylulose 5-phosphate + NADPH + H(+). Its pathway is isoprenoid biosynthesis; isopentenyl diphosphate biosynthesis via DXP pathway; isopentenyl diphosphate from 1-deoxy-D-xylulose 5-phosphate: step 1/6. Its function is as follows. Catalyzes the NADPH-dependent rearrangement and reduction of 1-deoxy-D-xylulose-5-phosphate (DXP) to 2-C-methyl-D-erythritol 4-phosphate (MEP). This is 1-deoxy-D-xylulose 5-phosphate reductoisomerase from Nitratidesulfovibrio vulgaris (strain DP4) (Desulfovibrio vulgaris).